The chain runs to 263 residues: Formamidopyrimidine-DNA glycosylase (263 aa).

Catalysis depends on Pro-2, which acts as the Schiff-base intermediate with DNA. Glu-3 acts as the Proton donor in catalysis. Lys-59 (proton donor; for beta-elimination activity) is an active-site residue. His-93 and Arg-111 together coordinate DNA. An FPG-type zinc finger spans residues 229–263; the sequence is KVYGKNGSLCVRCNNVLIRERHAGRSTHYCPHCQK. The Proton donor; for delta-elimination activity role is filled by Arg-253.

The protein belongs to the FPG family. Monomer. Zn(2+) is required as a cofactor.

The enzyme catalyses Hydrolysis of DNA containing ring-opened 7-methylguanine residues, releasing 2,6-diamino-4-hydroxy-5-(N-methyl)formamidopyrimidine.. It catalyses the reaction 2'-deoxyribonucleotide-(2'-deoxyribose 5'-phosphate)-2'-deoxyribonucleotide-DNA = a 3'-end 2'-deoxyribonucleotide-(2,3-dehydro-2,3-deoxyribose 5'-phosphate)-DNA + a 5'-end 5'-phospho-2'-deoxyribonucleoside-DNA + H(+). Functionally, involved in base excision repair of DNA damaged by oxidation or by mutagenic agents. Acts as a DNA glycosylase that recognizes and removes damaged bases. Has a preference for oxidized purines, such as 7,8-dihydro-8-oxoguanine (8-oxoG). Has AP (apurinic/apyrimidinic) lyase activity and introduces nicks in the DNA strand. Cleaves the DNA backbone by beta-delta elimination to generate a single-strand break at the site of the removed base with both 3'- and 5'-phosphates. In Carboxydothermus hydrogenoformans (strain ATCC BAA-161 / DSM 6008 / Z-2901), this protein is Formamidopyrimidine-DNA glycosylase.